A 410-amino-acid chain; its full sequence is Elongation factor Tu, chloroplastic (410 aa).

The region spanning 10 to 215 (KPHINIGTIG…MVDKYFPTPE (206 aa)) is the tr-type G domain. Positions 19-26 (GHVDHGKT) are G1. GTP is bound at residue 19–26 (GHVDHGKT). Thr-26 serves as a coordination point for Mg(2+). The G2 stretch occupies residues 61 to 65 (GITIN). The tract at residues 82-85 (DCPG) is G3. Residues 82-86 (DCPGH) and 137-140 (NKAD) each bind GTP. The interval 137-140 (NKAD) is G4. Residues 175–177 (SAL) are G5.

This sequence belongs to the TRAFAC class translation factor GTPase superfamily. Classic translation factor GTPase family. EF-Tu/EF-1A subfamily.

The protein resides in the plastid. The protein localises to the chloroplast. It carries out the reaction GTP + H2O = GDP + phosphate + H(+). GTP hydrolase that promotes the GTP-dependent binding of aminoacyl-tRNA to the A-site of ribosomes during protein biosynthesis. The sequence is that of Elongation factor Tu, chloroplastic (tufA) from Cyanidium caldarium (Red alga).